A 332-amino-acid chain; its full sequence is FAD-dependent monooxygenase elcE (332 aa).

Belongs to the oxygen-dependent FAD-linked oxidoreductase family.

It participates in secondary metabolite biosynthesis. In terms of biological role, FAD-dependent monooxygenase; part of the gene cluster that mediates the biosynthesis of elsinochrome C, a perelyenequinone phytotoxin structurally similar to cercosporin. The first step of elsinochrome C biosynthesis is performed by the polyketide synthase elcA which catalyzes the formation of nor-toralactone. The starter unit acyltransferase (SAT) domain of elcA initiates polyketide extension by the selective utilization of acetyl-CoA, which is elongated to the heptaketide in the beta-ketoacyl synthase (KS) domain by successive condensations with six malonyl units introduced by the malonyl acyltransferase (MAT) domain. The product template (PT) domain catalyzes C4-C9 and C2-C11 aldol cyclizations and dehydrations to a trihydroxynaphthalene, which is thought to be delivered to the thioesterase (TE) domain for product release. The bifunctional enzyme elcB then methylates nor-toralactone to toralactone before conducting an unusual oxidative aromatic ring opening. The next step in perylenequinone biosynthesis is an O-methylation at the nascent OH-6 of the elcB product performed by the O-methyltransferase elcD. The oxidative coupling of the two monomeric naphthol units in perylenequinone biosynthesis is catalyzed by the FAD-dependent monooxygenase elcE and the multicopper oxidase elcG. ElcG might catalyze the first intermolecular coupling in a regio- and stereo-selective manner via a phenol radical coupling mechanism and the elcE could forge the second C-C bond intramolecularly via a hydride transfer mechanism. The fasciclin domain-containing protein elcF might also play a role duting this step. The last piece of the puzzle in the biosynthesis of elsinochrome C is the additional annulation by enolate coupling to afford the dihydrobenzo(ghi)perylenequinone system, catalyzed by the FAD-dependent monooxygenase elcH. The sequence is that of FAD-dependent monooxygenase elcE from Phaeosphaeria nodorum (strain SN15 / ATCC MYA-4574 / FGSC 10173) (Glume blotch fungus).